Consider the following 185-residue polypeptide: Ribosome-recycling factor (185 aa).

The protein belongs to the RRF family.

Its subcellular location is the cytoplasm. Functionally, responsible for the release of ribosomes from messenger RNA at the termination of protein biosynthesis. May increase the efficiency of translation by recycling ribosomes from one round of translation to another. This chain is Ribosome-recycling factor, found in Alkalilimnicola ehrlichii (strain ATCC BAA-1101 / DSM 17681 / MLHE-1).